A 450-amino-acid polypeptide reads, in one-letter code: Aspartyl/glutamyl-tRNA(Asn/Gln) amidotransferase subunit B (450 aa).

The protein belongs to the GatB/GatE family. GatB subfamily. Heterotrimer of A, B and C subunits.

It carries out the reaction L-glutamyl-tRNA(Gln) + L-glutamine + ATP + H2O = L-glutaminyl-tRNA(Gln) + L-glutamate + ADP + phosphate + H(+). The enzyme catalyses L-aspartyl-tRNA(Asn) + L-glutamine + ATP + H2O = L-asparaginyl-tRNA(Asn) + L-glutamate + ADP + phosphate + 2 H(+). Functionally, allows the formation of correctly charged Asn-tRNA(Asn) or Gln-tRNA(Gln) through the transamidation of misacylated Asp-tRNA(Asn) or Glu-tRNA(Gln) in organisms which lack either or both of asparaginyl-tRNA or glutaminyl-tRNA synthetases. The reaction takes place in the presence of glutamine and ATP through an activated phospho-Asp-tRNA(Asn) or phospho-Glu-tRNA(Gln). This is Aspartyl/glutamyl-tRNA(Asn/Gln) amidotransferase subunit B from Methanobrevibacter smithii (strain ATCC 35061 / DSM 861 / OCM 144 / PS).